A 90-amino-acid polypeptide reads, in one-letter code: Progonadoliberin-3 (90 aa).

Positions 1-23 are cleaved as a signal peptide; that stretch reads MEANSRVMVRVLLLALVVQVTLS. Gln-24 carries the pyrrolidone carboxylic acid modification. Gly-33 is subject to Glycine amide. The disordered stretch occupies residues 56 to 90; sequence LPEEASAQTQERLRPYNVINDDSSHFDRKKRSPNK.

Belongs to the GnRH family.

The protein resides in the secreted. Stimulates the secretion of gonadotropins. This is Progonadoliberin-3 (gnrh3) from Dicentrarchus labrax (European seabass).